Here is a 316-residue protein sequence, read N- to C-terminus: Ubiquinol oxidase, mitochondrial (316 aa).

A mitochondrion-targeting transit peptide spans 1 to 26 (MGVRAQPLLARSLITTTQPWILSARS). The helical transmembrane segment at 124–144 (VHRAVVLETVAAVPGMVAGML) threads the bilayer. Glutamate 131, glutamate 170, and histidine 173 together coordinate Fe cation. A helical transmembrane segment spans residues 189–209 (MLVALVQTLFFNVYFLAYMLF). Glutamate 221, glutamate 272, and histidine 275 together coordinate Fe cation.

This sequence belongs to the alternative oxidase family. Fe cation serves as cofactor.

Its subcellular location is the mitochondrion inner membrane. It catalyses the reaction 2 a ubiquinol + O2 = 2 a ubiquinone + 2 H2O. Functionally, alternative oxidase which function may be to reoxidize reducing equivalents produced by glycolysis such as ubiquinol. The sequence is that of Ubiquinol oxidase, mitochondrial (AOX) from Batrachochytrium dendrobatidis (strain JAM81 / FGSC 10211) (Frog chytrid fungus).